Consider the following 415-residue polypeptide: Serine hydroxymethyltransferase 3 (415 aa).

(6S)-5,6,7,8-tetrahydrofolate-binding positions include Leu-122 and 126-128; that span reads GHL. Lys-230 is modified (N6-(pyridoxal phosphate)lysine).

Belongs to the SHMT family. In terms of assembly, homodimer. Pyridoxal 5'-phosphate serves as cofactor.

The protein localises to the cytoplasm. The catalysed reaction is (6R)-5,10-methylene-5,6,7,8-tetrahydrofolate + glycine + H2O = (6S)-5,6,7,8-tetrahydrofolate + L-serine. Its pathway is one-carbon metabolism; tetrahydrofolate interconversion. It functions in the pathway amino-acid biosynthesis; glycine biosynthesis; glycine from L-serine: step 1/1. In terms of biological role, catalyzes the reversible interconversion of serine and glycine with tetrahydrofolate (THF) serving as the one-carbon carrier. This reaction serves as the major source of one-carbon groups required for the biosynthesis of purines, thymidylate, methionine, and other important biomolecules. Also exhibits THF-independent aldolase activity toward beta-hydroxyamino acids, producing glycine and aldehydes, via a retro-aldol mechanism. This is Serine hydroxymethyltransferase 3 from Burkholderia lata (strain ATCC 17760 / DSM 23089 / LMG 22485 / NCIMB 9086 / R18194 / 383).